Here is a 206-residue protein sequence, read N- to C-terminus: MARYLGPKLKLSRREGTDLFLKSGVRAIDTKCKIEQAPGQHGARKPRLSDYGVQLREKQKVRRTYGVLERQFRNYYKEAARLKGNTGENLLALLEGRLDNVVYRMGFGATRAESRQLVSHKSIMVNGRVVSIASYQVTPNDVVSIREKAKKQSRVKAALELAEQREKPTWLEVDATKMEGVFKRIPERTDLSADINEHLIVELYSK.

The region spanning 96 to 156 (GRLDNVVYRM…EKAKKQSRVK (61 aa)) is the S4 RNA-binding domain.

The protein belongs to the universal ribosomal protein uS4 family. Part of the 30S ribosomal subunit. Contacts protein S5. The interaction surface between S4 and S5 is involved in control of translational fidelity.

Functionally, one of the primary rRNA binding proteins, it binds directly to 16S rRNA where it nucleates assembly of the body of the 30S subunit. In terms of biological role, with S5 and S12 plays an important role in translational accuracy. The sequence is that of Small ribosomal subunit protein uS4 from Erwinia tasmaniensis (strain DSM 17950 / CFBP 7177 / CIP 109463 / NCPPB 4357 / Et1/99).